Reading from the N-terminus, the 1071-residue chain is Exportin-1 (1071 aa).

A necessary for HTLV-1 Rex-mediated mRNA export region spans residues 1–679 (MPAIMTMLAD…QQATKNVDIL (679 aa)). In terms of domain architecture, Importin N-terminal spans 46 to 112 (AQEVLTHLKE…KKYVVGLIIK (67 aa)). HEAT repeat units lie at residues 217–240 (QNAP…PLGY), 241–277 (IFET…VSVS), 354–472 (MLLV…YVDT), 515–553 (RFLV…QYPR), 560–597 (KFLK…KCRR), and 602–639 (VQVG…AVGY). The interval 327 to 450 (CTFLKEHDQL…VREFMKDTDS (124 aa)) is interaction with Ran and nuclear export complex formation. The residue at position 391 (serine 391) is a Phosphoserine. The necessary for HTLV-1 Rex multimerization stretch occupies residues 411–414 (PMLF). Positions 411 to 481 (PMLFKVRLLM…TERIMTEKLH (71 aa)) are interaction with RANBP3. An N6-acetyllysine modification is found at lysine 446. A Phosphothreonine modification is found at threonine 448. Phosphoserine is present on serine 450. Phosphotyrosine is present on tyrosine 454. Lysine 693 is subject to N6-acetyllysine. HEAT repeat units follow at residues 775–813 (NFVP…KLGG), 885–916 (TMRN…SFYQ), 917–954 (TYFC…NLVE), and 1002–1039 (FSLN…EERE). Residues 800–820 (VLSTMAIIVNKLGGHITAEIP) form an interaction with HIV-1 Rev region. Position 1031 is a phosphoserine (serine 1031).

Belongs to the exportin family. Found in a U snRNA export complex with PHAX/RNUXA, NCBP1/CBP80, NCBP2/CBP20, RAN, XPO1 and m7G-capped RNA. Component of a nuclear export receptor complex composed of KPNB1, RAN, SNUPN and XPO1. Found in a trimeric export complex with SNUPN, RAN and XPO1. Found in a nuclear export complex with RANBP3 and RAN. Found in a 60S ribosomal subunit export complex with NMD3, RAN, XPO1. Interacts with DDX3X, NMD3, NUP42, NUP88, NUP214, RANBP3 and TERT. Interacts with NEMF (via its N-terminus). Interacts with the monomeric form of BIRC5/survivin deacetylated at 'Lys-129'. Interacts with DTNBP1 and SERTAD2; the interactions translocate DTNBP1 and SERTAD2 out of the nucleus. Interacts with ATF2. Interacts with SLC35G1 and STIM1. Interacts with DCAF8. Interacts with CPEB3. Interacts with HAX1. Interacts with BOK; translocates to the cytoplasm. Interacts with HSP90AB1. Interacts with LRPPRC; interacts with LRPPRC alone and also when LRPPRC is in complex with EIF4E and with EIF4E sensitivity element (4ESE)-containing mRNAs to form an EIF4E-dependent mRNA export complex. In terms of assembly, (Microbial infection) Interacts with HIV-1 Rev. As to quaternary structure, (Microbial infection) Interacts with HTLV-1 Rex. (Microbial infection) Interacts with influenza A nucleoprotein. In terms of assembly, (Microbial infection) Interacts with Epstein-Barr virus protein BMLF1. As to quaternary structure, (Microbial infection) Part of a tetrameric complex composed of CRM1, importin alpha/beta dimer and the Venezuelan equine encephalitis virus (VEEV) capsid; this complex blocks the receptor-mediated transport through the nuclear pore. (Microbial infection) Interacts with SARS-CoV virus protein ORF9b; this interaction mediates protein ORF9b export out of the nucleus. In terms of tissue distribution, expressed in heart, brain, placenta, lung, liver, skeletal muscle, pancreas, spleen, thymus, prostate, testis, ovary, small intestine, colon and peripheral blood leukocytes. Not expressed in the kidney.

It is found in the cytoplasm. The protein localises to the nucleus. It localises to the nucleoplasm. Its subcellular location is the cajal body. The protein resides in the nucleolus. Mediates the nuclear export of cellular proteins (cargos) bearing a leucine-rich nuclear export signal (NES) and of RNAs. In the nucleus, in association with RANBP3, binds cooperatively to the NES on its target protein and to the GTPase RAN in its active GTP-bound form (Ran-GTP). Docking of this complex to the nuclear pore complex (NPC) is mediated through binding to nucleoporins. Upon transit of a nuclear export complex into the cytoplasm, disassembling of the complex and hydrolysis of Ran-GTP to Ran-GDP (induced by RANBP1 and RANGAP1, respectively) cause release of the cargo from the export receptor. The directionality of nuclear export is thought to be conferred by an asymmetric distribution of the GTP- and GDP-bound forms of Ran between the cytoplasm and nucleus. Involved in U3 snoRNA transport from Cajal bodies to nucleoli. Binds to late precursor U3 snoRNA bearing a TMG cap. Its function is as follows. (Microbial infection) Mediates the export of unspliced or incompletely spliced RNAs out of the nucleus from different viruses including HIV-1, HTLV-1 and influenza A. Interacts with, and mediates the nuclear export of HIV-1 Rev and HTLV-1 Rex proteins. Involved in HTLV-1 Rex multimerization. The protein is Exportin-1 (XPO1) of Homo sapiens (Human).